Reading from the N-terminus, the 127-residue chain is Ribosome-binding factor A (127 aa).

Belongs to the RbfA family. As to quaternary structure, monomer. Binds 30S ribosomal subunits, but not 50S ribosomal subunits or 70S ribosomes.

It localises to the cytoplasm. Functionally, one of several proteins that assist in the late maturation steps of the functional core of the 30S ribosomal subunit. Associates with free 30S ribosomal subunits (but not with 30S subunits that are part of 70S ribosomes or polysomes). Required for efficient processing of 16S rRNA. May interact with the 5'-terminal helix region of 16S rRNA. In Stenotrophomonas maltophilia (strain K279a), this protein is Ribosome-binding factor A.